The primary structure comprises 78 residues: MNKAKIFMNGQSQAVRLPKEFRFSVKEVSVIPLGKGIVLQPLPNSWKDVFQEMAEISSDDIFPEGRKDLPPQKRKYFE.

The SpoVT-AbrB domain maps to Ala-4–Asn-44.

The protein belongs to the VapB family. Forms complexes with VapC2; probably VapC2(4):VapB2(2) in the absence of DNA, and VapC2(4):VapB2(4) in the presence of DNA. Crystallizes as heterodimers with stoichiometry VapC2(4):VapB2(4) in the presence of its probable promoter DNA. The heterodimers are in contact via alternative VapC-VapC and VapB-VapB interactions. This subunit contacts DNA.

Antitoxin component of a type II toxin-antitoxin (TA) system. Upon expression in E.coli or S.cerevisiae neutralizes the effect of cognate toxin VapC2, partially inhibits the RNase activity of VapC2. The protein is Antitoxin VapB2 (vapB2) of Rickettsia felis (strain ATCC VR-1525 / URRWXCal2) (Rickettsia azadi).